Here is a 79-residue protein sequence, read N- to C-terminus: MNRTNKLILGAVVLGSTLLAGCSSNAKIDQLSSDVQTLSAKVDQLSNDVNAMRSDVQAAKDDAARANQRLDNKVFRICK.

An N-terminal signal peptide occupies residues 1–21; it reads MNRTNKLILGAVVLGSTLLAG. A lipid anchor (N-palmitoyl cysteine) is attached at Cys-22. Cys-22 carries the S-diacylglycerol cysteine lipid modification. 2 consecutive repeats follow at residues 25–35 and 39–49; these read NAKIDQLSSDV and SAKVDQLSNDV. A coiled-coil region spans residues 28 to 69; it reads IDQLSSDVQTLSAKVDQLSNDVNAMRSDVQAAKDDAARANQR. The residue at position 79 (Lys-79) is an N6-murein peptidoglycan lysine.

This sequence belongs to the Lpp family. As to quaternary structure, homotrimer.

It localises to the cell outer membrane. The protein localises to the secreted. Its subcellular location is the cell wall. In terms of biological role, a highly abundant outer membrane lipoprotein that controls the distance between the inner and outer membranes. The only protein known to be covalently linked to the peptidoglycan network (PGN). Also non-covalently binds the PGN. The link between the cell outer membrane and PGN contributes to maintenance of the structural and functional integrity of the cell envelope, and maintains the correct distance between the PGN and the outer membrane. The chain is Major outer membrane lipoprotein Lpp 2 from Salmonella typhi.